The chain runs to 38 residues: Toxin Lqh 8/6 (38 aa).

Cystine bridges form between Cys2–Cys19, Cys5–Cys28, Cys16–Cys33, and Cys20–Cys35.

In terms of tissue distribution, expressed by the venom gland.

It localises to the secreted. Its function is as follows. Toxin with unknown function in healthy organisms. On glioma cells, interacts with chloride channels (probably ClC-3/CLCN3) and MMP2 at the surface of glioma cells. This complex is then internalized via caveolae, thus inhibiting the chloride channels necessary for cell shrinkage and tumor propagation. The protein is Toxin Lqh 8/6 of Leiurus hebraeus (Hebrew deathstalker scorpion).